Consider the following 232-residue polypeptide: Ribose-5-phosphate isomerase A (232 aa).

Residues 28 to 31 (TGST), 83 to 86 (DGAD), and 96 to 99 (KGGG) each bind substrate. The active-site Proton acceptor is the glutamate 105. Lysine 123 contacts substrate.

This sequence belongs to the ribose 5-phosphate isomerase family. In terms of assembly, homodimer.

The catalysed reaction is aldehydo-D-ribose 5-phosphate = D-ribulose 5-phosphate. The protein operates within carbohydrate degradation; pentose phosphate pathway; D-ribose 5-phosphate from D-ribulose 5-phosphate (non-oxidative stage): step 1/1. Its function is as follows. Catalyzes the reversible conversion of ribose-5-phosphate to ribulose 5-phosphate. This is Ribose-5-phosphate isomerase A from Rhodopseudomonas palustris (strain BisB5).